The following is a 483-amino-acid chain: ATP-dependent RNA helicase DDX25 (483 aa).

A Nuclear export signal motif is present at residues 61 to 74; the sequence is LAANSLLNKLIHQS. Residues 97–125 carry the Q motif motif; sequence KTFEELRLKEELLKGIYAMGFNRPSKIQE. The Nuclear localization signal motif lies at 100-114; the sequence is EELRLKEELLKGIYA. Residues 130–300 form the Helicase ATP-binding domain; the sequence is MMLAHPPQNL…ERIIPDPNVI (171 aa). 143–150 serves as a coordination point for ATP; it reads SQSGTGKT. The DEAD box motif lies at 247 to 250; that stretch reads DEAD. In terms of domain architecture, Helicase C-terminal spans 311 to 478; it reads NIRQYYVLCE…QLNAEDMDEI (168 aa).

It belongs to the DEAD box helicase family. In terms of processing, phosphorylated on threonine residues. The phosphorylated form is found in the cytoplasm but not in the nucleus. In terms of tissue distribution, highly expressed in the Leydig and germ cells of the testis and weakly expressed in the pituitary and hypothalamus.

It localises to the cytoplasm. The protein resides in the nucleus. The catalysed reaction is ATP + H2O = ADP + phosphate + H(+). In terms of biological role, ATP-dependent RNA helicase. Required for mRNA export and translation regulation during spermatid development. In Homo sapiens (Human), this protein is ATP-dependent RNA helicase DDX25 (DDX25).